A 392-amino-acid chain; its full sequence is Formate-dependent phosphoribosylglycinamide formyltransferase (392 aa).

Residues 22-23 (EL) and glutamate 82 contribute to the N(1)-(5-phospho-beta-D-ribosyl)glycinamide site. Residues arginine 114, lysine 155, 160-165 (SSGKGQ), 195-198 (EGVV), and glutamate 203 contribute to the ATP site. Positions 119 to 308 (RLAAEELQLP…EFALHVRAFL (190 aa)) constitute an ATP-grasp domain. Mg(2+)-binding residues include glutamate 267 and glutamate 279. N(1)-(5-phospho-beta-D-ribosyl)glycinamide is bound by residues aspartate 286, lysine 355, and 362-363 (RR).

Belongs to the PurK/PurT family. As to quaternary structure, homodimer.

The enzyme catalyses N(1)-(5-phospho-beta-D-ribosyl)glycinamide + formate + ATP = N(2)-formyl-N(1)-(5-phospho-beta-D-ribosyl)glycinamide + ADP + phosphate + H(+). Its pathway is purine metabolism; IMP biosynthesis via de novo pathway; N(2)-formyl-N(1)-(5-phospho-D-ribosyl)glycinamide from N(1)-(5-phospho-D-ribosyl)glycinamide (formate route): step 1/1. Involved in the de novo purine biosynthesis. Catalyzes the transfer of formate to 5-phospho-ribosyl-glycinamide (GAR), producing 5-phospho-ribosyl-N-formylglycinamide (FGAR). Formate is provided by PurU via hydrolysis of 10-formyl-tetrahydrofolate. The polypeptide is Formate-dependent phosphoribosylglycinamide formyltransferase (Escherichia coli O1:K1 / APEC).